We begin with the raw amino-acid sequence, 426 residues long: Dihydrofolate synthase/folylpolyglutamate synthase (426 aa).

58–61 (GKGS) serves as a coordination point for ATP. A Mg(2+)-binding site is contributed by Ser-82. A 7,8-dihydropteroate-binding site is contributed by 121 to 124 (TRFE). Residue Glu-145 participates in Mg(2+) binding. A 7,8-dihydropteroate-binding site is contributed by 152–154 (LDA). Position 172 (His-172) interacts with Mg(2+). ATP is bound by residues Arg-289 and Asp-302.

The protein belongs to the folylpolyglutamate synthase family. In terms of assembly, monomer. Requires Mg(2+) as cofactor.

The enzyme catalyses 7,8-dihydropteroate + L-glutamate + ATP = 7,8-dihydrofolate + ADP + phosphate + H(+). It carries out the reaction (6S)-5,6,7,8-tetrahydrofolyl-(gamma-L-Glu)(n) + L-glutamate + ATP = (6S)-5,6,7,8-tetrahydrofolyl-(gamma-L-Glu)(n+1) + ADP + phosphate + H(+). It catalyses the reaction 10-formyltetrahydrofolyl-(gamma-L-Glu)(n) + L-glutamate + ATP = 10-formyltetrahydrofolyl-(gamma-L-Glu)(n+1) + ADP + phosphate + H(+). The catalysed reaction is (6R)-5,10-methylenetetrahydrofolyl-(gamma-L-Glu)(n) + L-glutamate + ATP = (6R)-5,10-methylenetetrahydrofolyl-(gamma-L-Glu)(n+1) + ADP + phosphate + H(+). It functions in the pathway cofactor biosynthesis; tetrahydrofolate biosynthesis; 7,8-dihydrofolate from 2-amino-4-hydroxy-6-hydroxymethyl-7,8-dihydropteridine diphosphate and 4-aminobenzoate: step 2/2. Its pathway is cofactor biosynthesis; tetrahydrofolylpolyglutamate biosynthesis. In terms of biological role, functions in two distinct reactions of the de novo folate biosynthetic pathway. Catalyzes the addition of a glutamate residue to dihydropteroate (7,8-dihydropteroate or H2Pte) to form dihydrofolate (7,8-dihydrofolate monoglutamate or H2Pte-Glu). Also catalyzes successive additions of L-glutamate to tetrahydrofolate or 10-formyltetrahydrofolate or 5,10-methylenetetrahydrofolate, leading to folylpolyglutamate derivatives. This chain is Dihydrofolate synthase/folylpolyglutamate synthase (folC), found in Buchnera aphidicola subsp. Baizongia pistaciae (strain Bp).